Consider the following 663-residue polypeptide: MSSKAVVFAYHDIGCAGIEALLNTGYDIAAVFTHADDPKENNFYGSVAQLCARNGIPVHAPEDANHPLWIERIAKLNPDYLFSFYYRNLLSEPLLATARKGAFNLHGSLLPKYRGRAPANWVLVNGETETGVTLHRMVKRADAGAILAQQKVIIERSDTGLTLHAKLRDAASNLLRDALPQLAQGKLAETAQDESQATYFGRRTAADGKLEWKKPAEELFNLVRAVTQPYPGAFCAVGEHKLVVWQADVVKGNEGLAPGRVISVNPLRIACGEDSLVIKFGQRNDNGLYLAGPSLANELGLVDGSVLRGAESGRKPRRTRVLILGVNGFIGNHLSERLLRDDRYEVYGLDIGSDAIERLRSHPNFHYVEGDISIHTEWIEYHIKKCDVVLPLVAIATPIEYTRNPLRVFELDFEENLKLVRYCVKYNKRVIFPSTSEVYGMCQDQYFDEDTSNLVVGPVNKQRWIYSVSKQLLDRVIWAYGAKGLNFTLFRPFNWMGPRLDRLDSARIGSSRAITQLILNLVEGTPIRLFDGGEQKRCFTDIADGIEALARIIDNDNDACNGQIINIGNPENEASIRQLGEELLRQFEAHPLRGNFPPFAGFRDVESKAFYGTGYQDVAHRKPSIENAKRLLNWEPTVEMSETIGNTLDFFLREAMLEIADKK.

Residues 1-307 (MSSKAVVFAY…ELGLVDGSVL (307 aa)) are formyltransferase ArnAFT. His-106 (proton donor; for formyltransferase activity) is an active-site residue. (6R)-10-formyltetrahydrofolate-binding positions include Arg-116 and 138-142 (VKRAD). Residues 317–663 (RRTRVLILGV…EAMLEIADKK (347 aa)) are dehydrogenase ArnADH. NAD(+) is bound by residues Asp-350 and 371–372 (DI). UDP-alpha-D-glucuronate contacts are provided by residues Ala-396, Tyr-401, and 435–436 (TS). Residue Glu-437 is the Proton acceptor; for decarboxylase activity of the active site. Residues Arg-463, Asn-494, 528 to 537 (RLFDGGEQKR), and Tyr-615 contribute to the UDP-alpha-D-glucuronate site. The active-site Proton donor; for decarboxylase activity is Arg-621.

In the N-terminal section; belongs to the Fmt family. UDP-L-Ara4N formyltransferase subfamily. The protein in the C-terminal section; belongs to the NAD(P)-dependent epimerase/dehydratase family. UDP-glucuronic acid decarboxylase subfamily. Homohexamer, formed by a dimer of trimers.

It catalyses the reaction UDP-alpha-D-glucuronate + NAD(+) = UDP-beta-L-threo-pentopyranos-4-ulose + CO2 + NADH. The catalysed reaction is UDP-4-amino-4-deoxy-beta-L-arabinose + (6R)-10-formyltetrahydrofolate = UDP-4-deoxy-4-formamido-beta-L-arabinose + (6S)-5,6,7,8-tetrahydrofolate + H(+). The protein operates within nucleotide-sugar biosynthesis; UDP-4-deoxy-4-formamido-beta-L-arabinose biosynthesis; UDP-4-deoxy-4-formamido-beta-L-arabinose from UDP-alpha-D-glucuronate: step 1/3. Its pathway is nucleotide-sugar biosynthesis; UDP-4-deoxy-4-formamido-beta-L-arabinose biosynthesis; UDP-4-deoxy-4-formamido-beta-L-arabinose from UDP-alpha-D-glucuronate: step 3/3. It participates in bacterial outer membrane biogenesis; lipopolysaccharide biosynthesis. Bifunctional enzyme that catalyzes the oxidative decarboxylation of UDP-glucuronic acid (UDP-GlcUA) to UDP-4-keto-arabinose (UDP-Ara4O) and the addition of a formyl group to UDP-4-amino-4-deoxy-L-arabinose (UDP-L-Ara4N) to form UDP-L-4-formamido-arabinose (UDP-L-Ara4FN). The modified arabinose is attached to lipid A and is required for resistance to polymyxin and cationic antimicrobial peptides. The polypeptide is Bifunctional polymyxin resistance protein ArnA (Pseudomonas fluorescens (strain SBW25)).